The chain runs to 1358 residues: MAQTFTGRKRIRKFFGKIKEVAEMPNLIEVQKASYDQFLQIEEPKGGRDDDGLQAVFKSVFPISDFSGASMLEFVRYEFEPPKYDVDECRQRGMTFAAPLKVTLRLIVFDVDPETGAKSVKDIKEQDVYTGDIPLMTMNGTFIVNGTERVIVSQMHRSPGVFFDHDKGKTHSSGKLLFAARIIPYRGSWLDIEFDAKDIVFARIDRRRKIPVTSLLYALGLDNEEILSTFYEKIPFTREKGGWRMPFDPKRMKGYKAVADLIDADTGEVVLEAGKKLTVRAGRQLAEKGLKALKISDEEMIGQYIAEDLVDLTSGEIHAEAGEEITEKTLKLLEETGYNEIPVLDIDHVNTGAYIRNTLTADKNVTREDALFDIYRVMRPGEPPTLDSAQAMFHSLFFDSERYDLSAVGRVKMNMRLDLDCPDTVRVLRRDDILSVIRTLVELRDGKGEIDDIDHLGNRRVRSVGELMENQYRVGLLRMERAIKERMSSVDIDTVMPQDLINAKPVAAAVREFFGSSQLSQFMDQTNPLSEITHKRRLSALGPGGLTRERAGFEVRDVHPTHYGRICPIETPEGPNIGLINSLATFARVNKYGFIEAPYRRVVDSKVTDEVVYLSAMEEGKYYVAQANIPLDKDGRFEEDLIVCRHAGDVLLVAPDRVDFMDVSPKQLVSVAAALIPFLENDDANRALMGSNMQRQAVPLVRSQAPLVGTGMEAVVARDSGAAIAARRTGVIDQVDATRIVIRATEEADPSKSGVDIYRLMKFQRSNQSTCINQRPLVRVGDQVKKGDIIADGPSTELGELALGRNVLVAFMPWNGYNFEDSILLSENIAKEDVFTSIHIEEFEAMARDTKLGPEEITRDIPNVSEEALKNLDEAGIVYIGAEVRAGDILVGKITPKGESPMTPEEKLLRAIFGEKAADVRDTSLRLPPGTTGTIVEVRVFNRHGVDKDERALAIEREEIERLAKDRDDEQAILDRNVYGRLIEILDGKTAIAGPKGFRKETVVTREILTEYPRSQWWLFAVADDAIMAELEAIRAQYDDSKKRLEQRFLDKVEKLQRGDELPPGVMKMVKVFVAVKRKIQPGDKMAGRHGNKGVVSRIVPVEDMPFLEDGTNVDIVLNPLGVPSRMNVGQILETHLGWACAGLGRQVAAAMEAYYGKQDLKPLRDRLETIYGKDEIEQLKDGELPELGENLRKGVPMATPVFDGAHEADIEQQLEKAGLDASGQSTLYDGRTGEPFDRKVTVGYIYMLKLHHLVDDKIHARSIGPYSLVTQQPLGGKAQFGGQRFGEMEVWALEAYGAAYTLQEMLTVKSDDVAGRTKVYEAIVRGEDTFESGIPESFNVLVKEMRSLGLNVDLENS.

This sequence belongs to the RNA polymerase beta chain family. The RNAP catalytic core consists of 2 alpha, 1 beta, 1 beta' and 1 omega subunit. When a sigma factor is associated with the core the holoenzyme is formed, which can initiate transcription.

It catalyses the reaction RNA(n) + a ribonucleoside 5'-triphosphate = RNA(n+1) + diphosphate. In terms of biological role, DNA-dependent RNA polymerase catalyzes the transcription of DNA into RNA using the four ribonucleoside triphosphates as substrates. In Xanthobacter autotrophicus (strain ATCC BAA-1158 / Py2), this protein is DNA-directed RNA polymerase subunit beta.